We begin with the raw amino-acid sequence, 544 residues long: Involucrin (544 aa).

Residues M1–L520 form a disordered region. Low complexity predominate over residues E76–H90. Composition is skewed to basic and acidic residues over residues E96–Q117, E124–L152, Q202–E234, Q252–G271, K283–Q297, Q304–Q347, Q354–Q411, K423–Q437, and K462–Q476. Residues Q477–L494 show a composition bias toward low complexity.

The protein belongs to the involucrin family. Directly or indirectly cross-linked to cornifelin (CNFN). Substrate of transglutaminase. Specific glutamines or lysines are cross-linked to keratins, desmoplakin and to inter involucrin molecules. In terms of tissue distribution, keratinocytes of epidermis and other stratified squamous epithelia.

The protein resides in the cytoplasm. Part of the insoluble cornified cell envelope (CE) of stratified squamous epithelia. This is Involucrin (IVL) from Aotus trivirgatus (Three-striped night monkey).